A 314-amino-acid polypeptide reads, in one-letter code: Methionyl-tRNA formyltransferase (314 aa).

111–114 (SLLP) serves as a coordination point for (6S)-5,6,7,8-tetrahydrofolate.

The protein belongs to the Fmt family.

It catalyses the reaction L-methionyl-tRNA(fMet) + (6R)-10-formyltetrahydrofolate = N-formyl-L-methionyl-tRNA(fMet) + (6S)-5,6,7,8-tetrahydrofolate + H(+). Functionally, attaches a formyl group to the free amino group of methionyl-tRNA(fMet). The formyl group appears to play a dual role in the initiator identity of N-formylmethionyl-tRNA by promoting its recognition by IF2 and preventing the misappropriation of this tRNA by the elongation apparatus. The polypeptide is Methionyl-tRNA formyltransferase (Coxiella burnetii (strain CbuG_Q212) (Coxiella burnetii (strain Q212))).